A 320-amino-acid chain; its full sequence is 1-aminocyclopropane-1-carboxylate oxidase 3 (320 aa).

A Fe2OG dioxygenase domain is found at 154 to 254; sequence PNFGTKVSNY…RMSIASFYNP (101 aa). 3 residues coordinate Fe cation: His178, Asp180, and His235.

Belongs to the iron/ascorbate-dependent oxidoreductase family. The cofactor is Fe cation. Flowers.

The catalysed reaction is 1-aminocyclopropane-1-carboxylate + L-ascorbate + O2 = ethene + L-dehydroascorbate + hydrogen cyanide + CO2 + 2 H2O. It functions in the pathway alkene biosynthesis; ethylene biosynthesis via S-adenosyl-L-methionine; ethylene from S-adenosyl-L-methionine: step 2/2. The protein is 1-aminocyclopropane-1-carboxylate oxidase 3 (ACO3) of Cucumis melo (Muskmelon).